Consider the following 427-residue polypeptide: Enolase (427 aa).

(2R)-2-phosphoglycerate is bound at residue Gln-163. The active-site Proton donor is Glu-205. Residues Asp-242, Glu-285, and Asp-312 each coordinate Mg(2+). (2R)-2-phosphoglycerate-binding residues include Lys-337, Arg-366, Ser-367, and Lys-388. Residue Lys-337 is the Proton acceptor of the active site.

Belongs to the enolase family. The cofactor is Mg(2+).

Its subcellular location is the cytoplasm. The protein localises to the secreted. The protein resides in the cell surface. It carries out the reaction (2R)-2-phosphoglycerate = phosphoenolpyruvate + H2O. Its pathway is carbohydrate degradation; glycolysis; pyruvate from D-glyceraldehyde 3-phosphate: step 4/5. Functionally, catalyzes the reversible conversion of 2-phosphoglycerate (2-PG) into phosphoenolpyruvate (PEP). It is essential for the degradation of carbohydrates via glycolysis. The sequence is that of Enolase from Bradyrhizobium diazoefficiens (strain JCM 10833 / BCRC 13528 / IAM 13628 / NBRC 14792 / USDA 110).